The chain runs to 89 residues: Submaxillary mucin (89 aa).

Residues 1 to 89 (AGSVGRTAGG…VGGSPVATTL (89 aa)) form a disordered region. The O-linked (GalNAc...) serine; partial glycan is linked to Ser-3. O-linked (GalNAc...) threonine; partial glycans are attached at residues Thr-7 and Thr-14. Ser-15 carries an O-linked (GalNAc...) serine; partial glycan. O-linked (GalNAc...) threonine; partial glycosylation is present at Thr-23. An O-linked (GalNAc...) serine; partial glycan is attached at Ser-25. The O-linked (GalNAc...) threonine; partial glycan is linked to Thr-27. O-linked (GalNAc...) serine; partial glycosylation is present at Ser-29. Thr-34 is a glycosylation site (O-linked (GalNAc...) threonine; partial). The O-linked (GalNAc...) serine; partial glycan is linked to Ser-38. O-linked (GalNAc...) threonine; partial glycosylation occurs at Thr-42. 2 O-linked (GalNAc...) serine; partial glycosylation sites follow: Ser-47 and Ser-49. O-linked (GalNAc...) threonine; partial glycosylation occurs at Thr-50. Residue Ser-54 is glycosylated (O-linked (GalNAc...) serine; partial). Over residues 56-71 (APGTTLAGRAGTTLGP) the composition is skewed to low complexity. Thr-59, Thr-60, Thr-67, and Thr-68 each carry an O-linked (GalNAc...) threonine; partial glycan. Ser-73 and Ser-76 each carry an O-linked (GalNAc...) serine; partial glycan. O-linked (GalNAc...) threonine; partial glycosylation is present at Thr-78. An O-linked (GalNAc...) serine; partial glycan is attached at Ser-83.

Heavily O-glycosylated at most but not all Ser and Thr residues. In terms of tissue distribution, expressed in the submaxillary salivary gland.

It localises to the secreted. The protein is Submaxillary mucin of Canis lupus familiaris (Dog).